Consider the following 483-residue polypeptide: Endoplasmic reticulum lectin 1 (483 aa).

An N-terminal signal peptide occupies residues 1–33 (MEEGDGGLRSLVPGGPLLLVLYGLLEASGGGRA). MRH domains lie at 111-246 (SSCS…LCSH) and 342-469 (SYCF…ICKI). A disulfide bridge connects residues C113 and C126. An N-linked (GlcNAc...) asparagine glycan is attached at N195. Disulfide bonds link C199/C232, C215/C244, C344/C357, C421/C455, and C436/C467.

May form a complex with OS9, HSPA5, SYVN1, and SEL1L with which it interacts directly. Interacts (via PRKCSH 2 domain) with KREMEN2 (when glycosylated). Interacts with HSPA5. Post-translationally, N-glycosylated.

The protein localises to the endoplasmic reticulum lumen. Its function is as follows. Probable lectin that binds selectively to improperly folded lumenal proteins. May function in endoplasmic reticulum quality control and endoplasmic reticulum-associated degradation (ERAD) of both non-glycosylated proteins and glycoproteins. The protein is Endoplasmic reticulum lectin 1 (Erlec1) of Mus musculus (Mouse).